A 228-amino-acid chain; its full sequence is MAEDKTKPSELDQGKYDADDNVKIICLGDSAVGKSKLMERFLMDGFQPQQLSTYALTLYKHTATVDGRTILVDFWDTAGQERFQSMHASYYHKAHACIMVFDVQRKVTYRNLSTWYTELREFRPEIPCIVVANKIDDINVTQKSFNFAKKFSLPLYFVSAADGTNVVKLFNDAIRLAVSYKQNSQDFMDEIFQELENFSLEQEEEDVPDQEQSSSIETPSEEAASPHS.

GTP contacts are provided by residues 28-35 (GDSAVGKS), 76-80 (DTAGQ), and 133-136 (NKID). A disordered region spans residues 200-228 (LEQEEEDVPDQEQSSSIETPSEEAASPHS).

Belongs to the small GTPase superfamily. Rab family. Interacts (in its GTP-bound form) with CEP19 (via residues 121-150); this interaction is required for its localization to the mother centriole and cilium basal body. Interacts (in its GTP-bound form) with the intraflagellar transport (IFT) complex B (via the IFT74-IFT81 heterodimer). Binding to CEP19 and the IFT74-IFT81 heterodimer is mutually exclusive. In terms of tissue distribution, expressed in the testis.

The protein localises to the cytoplasm. The protein resides in the cytoskeleton. It localises to the microtubule organizing center. Its subcellular location is the centrosome. It is found in the centriole. The protein localises to the cilium basal body. Small GTPase required for ciliation. Activated in a guanine nucleotide exchange factor (GEF)-independent manner via its intrinsic GDP for GTP nucleotide exchange ability. Involved in ciliary assembly by binding the intraflagellar transport (IFT) complex B from the large pool pre-docked at the base of the cilium and thus triggers its entry into the cilia. This Homo sapiens (Human) protein is Rab-like protein 2B (RABL2B).